The following is a 408-amino-acid chain: MTTKGPESEHPSVTLFRQYLRICTVQPNPDYGSAVTFLEERARQLGLSCQKIEVAPGYVITVLTWPGTNPLLHSILLNSHTDVVPVFKEHWHHDPFEAFKDSEGYIYARGAQDMKSVSIQYLEAVRRLKSEGHRFPRTIHMTFVPDEEVGGHKGMELFVKRPEFQALRAGFALDEGLANPTDAFTVFYSERSPWWIRVTSTGKPGHASRFIEDTAAEKLHKVVNSILAFREKERQRLQANPHLKEGAVTSVNLTKLEGGVAYNVVPATMSACFDFRVAPDVDMKAFEKQLQSWCQEAGEGVTFEFAQKFTEPRMTPTDDTDPWWAAFSGACKEMNLTLEPEIFPAATDSRYIRAVGIPALGFSPMNRTPVLLHDHNERLHEAVFLRGVDIYTRLVAALASVPALPGES.

Histidine 80 provides a ligand contact to Zn(2+). The active site involves aspartate 82. Aspartate 113 provides a ligand contact to Zn(2+). The active-site Proton acceptor is glutamate 147. Zn(2+)-binding residues include glutamate 148, glutamate 175, and histidine 373. At serine 408 the chain carries Phosphoserine.

The protein belongs to the peptidase M20A family. As to quaternary structure, homodimer. The cofactor is Zn(2+). In terms of processing, the N-terminus is blocked.

It localises to the cytoplasm. The catalysed reaction is an N-acyl-L-amino acid + H2O = an L-alpha-amino acid + a carboxylate. The enzyme catalyses an N-acetyl-L-cysteine-S-conjugate + H2O = an S-substituted L-cysteine + acetate. Its function is as follows. Involved in the hydrolysis of N-acylated or N-acetylated amino acids (except L-aspartate). In Rattus norvegicus (Rat), this protein is Aminoacylase-1A (Acy1a).